The primary structure comprises 210 residues: LexA repressor (210 aa).

Residues 28-48 (FEEIAEGMGLSSLATVHKHIG) constitute a DNA-binding region (H-T-H motif). Active-site for autocatalytic cleavage activity residues include Ser-131 and Lys-169.

Belongs to the peptidase S24 family. As to quaternary structure, homodimer.

The catalysed reaction is Hydrolysis of Ala-|-Gly bond in repressor LexA.. Represses a number of genes involved in the response to DNA damage (SOS response), including recA and lexA. In the presence of single-stranded DNA, RecA interacts with LexA causing an autocatalytic cleavage which disrupts the DNA-binding part of LexA, leading to derepression of the SOS regulon and eventually DNA repair. This Koribacter versatilis (strain Ellin345) protein is LexA repressor.